The chain runs to 295 residues: Protoheme IX farnesyltransferase 2 (295 aa).

The next 9 membrane-spanning stretches (helical) occupy residues 9-29 (ITKP…FFLA), 36-56 (FALF…GCVF), 83-103 (LTLA…LLYV), 108-128 (LSAF…SLWL), 135-155 (GTLV…CAVS), 163-183 (VTLL…IAIF), 209-229 (IVLY…GGYA), 230-250 (GLGY…MAWG), and 264-284 (VFGF…VDSQ).

The protein belongs to the UbiA prenyltransferase family. Protoheme IX farnesyltransferase subfamily.

The protein localises to the cell inner membrane. It carries out the reaction heme b + (2E,6E)-farnesyl diphosphate + H2O = Fe(II)-heme o + diphosphate. Its pathway is porphyrin-containing compound metabolism; heme O biosynthesis; heme O from protoheme: step 1/1. In terms of biological role, converts heme B (protoheme IX) to heme O by substitution of the vinyl group on carbon 2 of heme B porphyrin ring with a hydroxyethyl farnesyl side group. The polypeptide is Protoheme IX farnesyltransferase 2 (Pseudomonas putida (strain W619)).